The sequence spans 177 residues: ATP synthase subunit delta, chloroplastic (177 aa).

It belongs to the ATPase delta chain family. F-type ATPases have 2 components, F(1) - the catalytic core - and F(0) - the membrane proton channel. F(1) has five subunits: alpha(3), beta(3), gamma(1), delta(1), epsilon(1). CF(0) has four main subunits: a(1), b(1), b'(1) and c(10-14). The alpha and beta chains form an alternating ring which encloses part of the gamma chain. F(1) is attached to F(0) by a central stalk formed by the gamma and epsilon chains, while a peripheral stalk is formed by the delta, b and b' chains.

The protein localises to the plastid. Its subcellular location is the chloroplast thylakoid membrane. In terms of biological role, f(1)F(0) ATP synthase produces ATP from ADP in the presence of a proton or sodium gradient. F-type ATPases consist of two structural domains, F(1) containing the extramembraneous catalytic core and F(0) containing the membrane proton channel, linked together by a central stalk and a peripheral stalk. During catalysis, ATP synthesis in the catalytic domain of F(1) is coupled via a rotary mechanism of the central stalk subunits to proton translocation. Functionally, this protein is part of the stalk that links CF(0) to CF(1). It either transmits conformational changes from CF(0) to CF(1) or is implicated in proton conduction. This chain is ATP synthase subunit delta, chloroplastic, found in Galdieria sulphuraria (Red alga).